Reading from the N-terminus, the 1080-residue chain is Serine/threonine-protein kinase KIC1 (1080 aa).

A Protein kinase domain is found at 23–276 (FKRTEVIGRG…ADDLLKSKFI (254 aa)). ATP-binding positions include 29-37 (IGRGKFGVV) and lysine 52. Aspartate 144 serves as the catalytic Proton acceptor. 4 disordered regions span residues 308–347 (EGSIPENEPSKPSEAPKPSQNGGGDEAQKSIASNDNEIKR), 615–760 (KARS…LAPP), 787–831 (STLN…LQMP), and 901–956 (SQSI…NTGN). A compositionally biased stretch (low complexity) spans 312–326 (PENEPSKPSEAPKPS). Positions 615-626 (KARSSTVTAGTP) are enriched in polar residues. A compositionally biased stretch (low complexity) spans 627 to 638 (SSSSSIQYKSPS). The span at 656 to 673 (STITNQKLGSAVASNSGI) shows a compositional bias: polar residues. Residues 674-689 (SSTPNNSNNYNNNTDS) are compositionally biased toward low complexity. Residues 693 to 726 (RGSSGSNTANSTQMGITNPGNVTKLSTHKASSPS) are compositionally biased toward polar residues. Serine 735 is subject to Phosphoserine. Residues 743–756 (SPTQNIGHNSTHTN) show a composition bias toward polar residues. Residues 787–807 (STLNTISGNSSNNLTSSNYFS) are compositionally biased toward low complexity. Residues 808 to 821 (NEKEGSRVNGDFKR) show a composition bias toward basic and acidic residues. Over residues 901 to 913 (SQSISNRKNSSAS) the composition is skewed to polar residues. Over residues 918–956 (NILGSSVSGNVSGIGNNNVGSNNNSGPNNSVPLSANTGN) the composition is skewed to low complexity.

This sequence belongs to the protein kinase superfamily. Ser/Thr protein kinase family. As to quaternary structure, interacts with CDC31.

The enzyme catalyses L-seryl-[protein] + ATP = O-phospho-L-seryl-[protein] + ADP + H(+). It carries out the reaction L-threonyl-[protein] + ATP = O-phospho-L-threonyl-[protein] + ADP + H(+). In terms of biological role, protein kinase involved in morphogenesis and cell integrity. The polypeptide is Serine/threonine-protein kinase KIC1 (KIC1) (Saccharomyces cerevisiae (strain ATCC 204508 / S288c) (Baker's yeast)).